Consider the following 415-residue polypeptide: Serine hydroxymethyltransferase (415 aa).

Residues Leu120 and 124–126 contribute to the (6S)-5,6,7,8-tetrahydrofolate site; that span reads GHL. Lys229 bears the N6-(pyridoxal phosphate)lysine mark.

The protein belongs to the SHMT family. In terms of assembly, homodimer. It depends on pyridoxal 5'-phosphate as a cofactor.

It is found in the cytoplasm. The enzyme catalyses (6R)-5,10-methylene-5,6,7,8-tetrahydrofolate + glycine + H2O = (6S)-5,6,7,8-tetrahydrofolate + L-serine. The protein operates within one-carbon metabolism; tetrahydrofolate interconversion. It participates in amino-acid biosynthesis; glycine biosynthesis; glycine from L-serine: step 1/1. In terms of biological role, catalyzes the reversible interconversion of serine and glycine with tetrahydrofolate (THF) serving as the one-carbon carrier. This reaction serves as the major source of one-carbon groups required for the biosynthesis of purines, thymidylate, methionine, and other important biomolecules. Also exhibits THF-independent aldolase activity toward beta-hydroxyamino acids, producing glycine and aldehydes, via a retro-aldol mechanism. This is Serine hydroxymethyltransferase from Caldicellulosiruptor bescii (strain ATCC BAA-1888 / DSM 6725 / KCTC 15123 / Z-1320) (Anaerocellum thermophilum).